Reading from the N-terminus, the 302-residue chain is Glutaminase (302 aa).

Substrate is bound by residues Ser61, Asn111, Glu155, Asn162, Tyr186, Tyr238, and Val256.

This sequence belongs to the glutaminase family. As to quaternary structure, homotetramer.

It carries out the reaction L-glutamine + H2O = L-glutamate + NH4(+). This Pseudomonas fluorescens (strain Pf0-1) protein is Glutaminase.